A 513-amino-acid chain; its full sequence is Sphingosine-1-phosphate transporter SPNS2 (513 aa).

A run of 11 helical transmembrane segments spans residues 102–122 (GLLQ…FGYL), 130–150 (VILS…SFIP), 163–183 (LVGI…GDLF), 190–210 (LMLS…YITG), 222–242 (WALR…LIFV), 276–296 (LATS…PLYL), 320–340 (LIFG…GAGA), 354–374 (LVCA…FVAA), 378–398 (IIAA…NWAI), 422–442 (TSHL…SDLI), and 463–483 (LCPF…LFFL).

It belongs to the major facilitator superfamily. Spinster (TC 2.A.1.49) family.

It localises to the cell membrane. The protein localises to the endosome membrane. It carries out the reaction sphing-4-enine 1-phosphate(in) = sphing-4-enine 1-phosphate(out). The catalysed reaction is sphinganine 1-phosphate(in) = sphinganine 1-phosphate(out). Lipid transporter that specifically mediates export of sphingosine-1-phosphate (sphing-4-enine 1-phosphate, S1P) and sphinganine-1-phosphate. The sequence is that of Sphingosine-1-phosphate transporter SPNS2 (spns2) from Xenopus tropicalis (Western clawed frog).